The following is a 283-amino-acid chain: Probable endonuclease 4 (283 aa).

His67, His107, Glu144, Asp178, His181, His215, Asp228, His230, and Glu260 together coordinate Zn(2+).

Belongs to the AP endonuclease 2 family. It depends on Zn(2+) as a cofactor.

The enzyme catalyses Endonucleolytic cleavage to 5'-phosphooligonucleotide end-products.. Functionally, endonuclease IV plays a role in DNA repair. It cleaves phosphodiester bonds at apurinic or apyrimidinic (AP) sites, generating a 3'-hydroxyl group and a 5'-terminal sugar phosphate. This Citrifermentans bemidjiense (strain ATCC BAA-1014 / DSM 16622 / JCM 12645 / Bem) (Geobacter bemidjiensis) protein is Probable endonuclease 4.